Consider the following 792-residue polypeptide: Probable phosphoketolase (792 aa).

This sequence belongs to the XFP family. The cofactor is thiamine diphosphate.

In Brucella melitensis biotype 1 (strain ATCC 23456 / CCUG 17765 / NCTC 10094 / 16M), this protein is Probable phosphoketolase.